The following is a 245-amino-acid chain: tRNA1(Val) (adenine(37)-N6)-methyltransferase (245 aa).

Belongs to the methyltransferase superfamily. tRNA (adenine-N(6)-)-methyltransferase family.

The protein resides in the cytoplasm. The catalysed reaction is adenosine(37) in tRNA1(Val) + S-adenosyl-L-methionine = N(6)-methyladenosine(37) in tRNA1(Val) + S-adenosyl-L-homocysteine + H(+). Specifically methylates the adenine in position 37 of tRNA(1)(Val) (anticodon cmo5UAC). The polypeptide is tRNA1(Val) (adenine(37)-N6)-methyltransferase (Enterobacter sp. (strain 638)).